The sequence spans 367 residues: 2-aminoethylphosphonate--pyruvate transaminase (367 aa).

K194 carries the post-translational modification N6-(pyridoxal phosphate)lysine.

The protein belongs to the class-V pyridoxal-phosphate-dependent aminotransferase family. PhnW subfamily. Homodimer. Pyridoxal 5'-phosphate is required as a cofactor.

The enzyme catalyses (2-aminoethyl)phosphonate + pyruvate = phosphonoacetaldehyde + L-alanine. Functionally, involved in phosphonate degradation. This chain is 2-aminoethylphosphonate--pyruvate transaminase, found in Salmonella choleraesuis (strain SC-B67).